The following is a 266-amino-acid chain: MEYLKFVLYGLIQGLTEFIPVSSTAHLKVISLFLGIDDPGASLSATIQLGSVIAIAYYFRNDIFNFRSQSSKKFLEYLFHERLLRSIFIGTIPIVLLGGSIKIFIPSFFENVLRSNLSIALVSFLMAFFMYLADSSKRGSINIKNHNFSNSFLIGIFQAFAIFPGVSRSGVTISSALISGWERGDAAKFSFLLGMPAISLAAIVEFVSSFNDFFSLGFFPLFVGLITTFLSSLLAIDFLLKYFSSNGLKIFIIYRVIFGVVILLNL.

Helical transmembrane passes span P39–F59, S86–P106, V112–L132, N147–S167, F189–S209, L216–I236, and N246–L266.

Belongs to the UppP family.

Its subcellular location is the cell inner membrane. The enzyme catalyses di-trans,octa-cis-undecaprenyl diphosphate + H2O = di-trans,octa-cis-undecaprenyl phosphate + phosphate + H(+). Its function is as follows. Catalyzes the dephosphorylation of undecaprenyl diphosphate (UPP). Confers resistance to bacitracin. The chain is Undecaprenyl-diphosphatase from Prochlorococcus marinus (strain MIT 9301).